The following is a 496-amino-acid chain: Probable histidine ammonia-lyase (496 aa).

A cross-link (5-imidazolinone (Ala-Gly)) is located at residues 141-143; that stretch reads ASG. Position 142 is a 2,3-didehydroalanine (Ser) (serine 142).

Belongs to the PAL/histidase family. In terms of processing, contains an active site 4-methylidene-imidazol-5-one (MIO), which is formed autocatalytically by cyclization and dehydration of residues Ala-Ser-Gly.

It is found in the cytoplasm. The catalysed reaction is L-histidine = trans-urocanate + NH4(+). The protein operates within amino-acid degradation; L-histidine degradation into L-glutamate; N-formimidoyl-L-glutamate from L-histidine: step 1/3. This chain is Probable histidine ammonia-lyase, found in Thermoplasma acidophilum (strain ATCC 25905 / DSM 1728 / JCM 9062 / NBRC 15155 / AMRC-C165).